The following is a 711-amino-acid chain: Hydroperoxide isomerase ALOXE3 (711 aa).

Positions 2-119 constitute a PLAT domain; that stretch reads AVYRLCVTTG…TVELRPGTAR (118 aa). Residues 119–711 form the Lipoxygenase domain; sequence RTICQDALPL…PPLIENSVSI (593 aa). Residues histidine 408, histidine 413, histidine 588, asparagine 592, and isoleucine 711 each contribute to the Fe cation site.

The protein belongs to the lipoxygenase family. Fe cation serves as cofactor.

Its subcellular location is the cytoplasm. The enzyme catalyses a hydroperoxyeicosatetraenoate = a hydroxy-epoxy-eicosatetraenoate. It carries out the reaction a hydroperoxyeicosatetraenoate = an oxoeicosatetraenoate + H2O. The catalysed reaction is (12R)-hydroperoxy-(5Z,8Z,10E,14Z)-eicosatetraenoate = (8R)-hydroxy-(11R,12R)-epoxy-(5Z,9E,14Z)-eicosatrienoate. It catalyses the reaction (12S)-hydroperoxy-(5Z,8Z,10E,14Z)-eicosatetraenoate = (8R)-hydroxy-(11S,12S)-epoxy-(5Z,9E,14Z)-eicosatrienoate. The enzyme catalyses (12S)-hydroperoxy-(5Z,8Z,10E,14Z)-eicosatetraenoate = (10R)-hydroxy-(11S,12S)-epoxy-(5Z,8Z,14Z)-eicosatrienoate. It carries out the reaction (15S)-hydroperoxy-(5Z,8Z,11Z,13E)-eicosatetraenoate = (13R)-hydroxy-(14S,15S)-epoxy-(5Z,8Z,11Z)-eicosatrienoate. The catalysed reaction is (5S)-hydroperoxy-(6E,8Z,11Z,14Z)-eicosatetraenoate = 7R-hydroxy-5S,6S-epoxy-(8Z,11Z,14Z)-eicosatrienoate. It catalyses the reaction (13S)-hydroperoxy-(9Z,11E)-octadecadienoate = 11-hydroxy-(12S,13S)-epoxy-(9Z)-octadecenoate. The enzyme catalyses N-[omega-(9R)-hydroperoxy-(10E,12Z)-octadecadienoyloxy]acyl-beta-D-glucosyl-(1&lt;-&gt;1)-octadecasphing-4E-enine = a N-[omega-(9R,10R)-epoxy-(13R)-hydroxy-(11E)-octadecenoyloxy]acyl-beta-D-glucosyl-(1&lt;-&gt;1)-sphing-4E-enine. It carries out the reaction a N-[omega-(9R)-hydroperoxy-(10E,12Z)-octadecadienoyloxy]-acylsphin-4E-enine = a N-[omega-(9R,10R)-epoxy-(13R)-hydroxy-(11E)-octadecenoyloxy]-acylsphing-4E-enine. The catalysed reaction is (12R)-hydroperoxy-(5Z,8Z,10E,14Z)-eicosatetraenoate = 12-oxo-(5Z,8Z,10E,14Z)-eicosatetraenoate + H2O. It catalyses the reaction (12S)-hydroperoxy-(5Z,8Z,10E,14Z)-eicosatetraenoate = 12-oxo-(5Z,8Z,10E,14Z)-eicosatetraenoate + H2O. The enzyme catalyses (15S)-hydroperoxy-(5Z,8Z,11Z,13E)-eicosatetraenoate = 15-oxo-(5Z,8Z,11Z,13E)-eicosatetraenoate + H2O. It carries out the reaction (13S)-hydroperoxy-(9Z,11E)-octadecadienoate = 13-oxo-(9Z,11E)-octadecadienoate + H2O. The catalysed reaction is (8S)-hydroperoxy-(5Z,9E,11Z,14Z)-eicosatetraenoate = (10R)-hydroxy-(8S,9S)-epoxy-(5Z,11Z,14Z)-eicosatrienoate. It catalyses the reaction (8R)-hydroperoxy-(5Z,9E,11Z,14Z)-eicosatetraenoate = 8-oxo-(5Z,9E,11Z,14Z)-eicosatetraenoate + H2O. The enzyme catalyses (8S)-hydroperoxy-(5Z,9E,11Z,14Z)-eicosatetraenoate = 8-oxo-(5Z,9E,11Z,14Z)-eicosatetraenoate + H2O. It functions in the pathway lipid metabolism; hydroperoxy eicosatetraenoic acid biosynthesis. Its pathway is lipid metabolism; sphingolipid metabolism. Non-heme iron-containing lipoxygenase which is atypical in that it displays a prominent hydroperoxide isomerase activity and a reduced lipoxygenases activity. The hydroperoxide isomerase activity catalyzes the isomerization of hydroperoxides, derived from arachidonic and linoleic acid by ALOX12B, into hepoxilin-type epoxyalcohols and ketones. In presence of oxygen, oxygenates polyunsaturated fatty acids, including arachidonic acid, to produce fatty acid hydroperoxides. In the skin, acts downstream of ALOX12B on the linoleate moiety of esterified omega-hydroxyacyl-sphingosine (EOS) ceramides to produce an epoxy-ketone derivative, a crucial step in the conjugation of omega-hydroxyceramide to membrane proteins. Therefore plays a crucial role in the synthesis of corneocytes lipid envelope and the establishment of the skin barrier to water loss. In parallel, it may have a signaling function in barrier formation through the production of hepoxilins metabolites. Also plays a role in adipocyte differentiation through hepoxilin A3 and hepoxilin B3 production which in turn activate PPARG. Through the production of hepoxilins in the spinal cord, it may regulate inflammatory tactile allodynia. The protein is Hydroperoxide isomerase ALOXE3 of Rattus norvegicus (Rat).